Reading from the N-terminus, the 1025-residue chain is Exocyst complex component 6 (1025 aa).

2 stretches are compositionally biased toward basic and acidic residues: residues Met-1–Ile-10 and Met-22–Lys-52. 3 disordered regions span residues Met-1 to Leu-122, Leu-135 to Lys-154, and Gln-666 to Glu-691. Residues Leu-19 to Ala-68 are a coiled coil. Low complexity predominate over residues Ser-71–Asp-93. A compositionally biased stretch (polar residues) spans Ser-104–Gln-118. 2 stretches are compositionally biased toward low complexity: residues Leu-135–Ser-147 and Gln-666–Asn-677. The span at Asn-678 to Glu-691 shows a compositional bias: acidic residues.

The protein belongs to the SEC15 family. As to quaternary structure, the exocyst complex is composed of sec3/exoc1, sec5/exoc2, sec6/exoc3, sec8/exoc4, sec10/exoc5, sec15/exoc6, exo70/exoc7 and exo84/exoc8.

It localises to the cytoplasm. The protein localises to the perinuclear region. Its subcellular location is the midbody. It is found in the midbody ring. Its function is as follows. Component of the exocyst complex involved in the docking of exocytic vesicles with fusion sites on the plasma membrane. This chain is Exocyst complex component 6 (exoc6), found in Dictyostelium discoideum (Social amoeba).